The chain runs to 559 residues: Potassium-transporting ATPase potassium-binding subunit (559 aa).

The next 13 helical transmembrane spans lie at glycine 5–serine 25, leucine 27–tryptophan 47, leucine 63–tryptophan 83, glycine 132–isoleucine 152, leucine 170–isoleucine 190, leucine 253–alanine 273, leucine 283–valine 303, phenylalanine 327–valine 347, alanine 356–valine 376, glycine 379–glycine 399, methionine 416–methionine 436, leucine 484–alanine 504, and glycine 524–isoleucine 544.

It belongs to the KdpA family. As to quaternary structure, the system is composed of three essential subunits: KdpA, KdpB and KdpC.

Its subcellular location is the cell inner membrane. In terms of biological role, part of the high-affinity ATP-driven potassium transport (or Kdp) system, which catalyzes the hydrolysis of ATP coupled with the electrogenic transport of potassium into the cytoplasm. This subunit binds the periplasmic potassium ions and delivers the ions to the membrane domain of KdpB through an intramembrane tunnel. The sequence is that of Potassium-transporting ATPase potassium-binding subunit from Salmonella dublin (strain CT_02021853).